The primary structure comprises 300 residues: Haloalkane dehalogenase (300 aa).

The AB hydrolase-1 domain occupies 32 to 155; the sequence is AIVFQHGNPT…PAVRGVFQGF (124 aa). The active-site Nucleophile is the Asp109. Glu133 serves as the catalytic Proton donor. The Proton acceptor role is filled by His273.

This sequence belongs to the haloalkane dehalogenase family. Type 2 subfamily. As to quaternary structure, monomer.

It catalyses the reaction 1-haloalkane + H2O = a halide anion + a primary alcohol + H(+). In terms of biological role, catalyzes hydrolytic cleavage of carbon-halogen bonds in halogenated aliphatic compounds, leading to the formation of the corresponding primary alcohols, halide ions and protons. The polypeptide is Haloalkane dehalogenase (Mycobacterium bovis (strain ATCC BAA-935 / AF2122/97)).